We begin with the raw amino-acid sequence, 533 residues long: DNA primase large subunit (533 aa).

Residues Cys298, Cys377, Cys393, and Cys433 each coordinate [4Fe-4S] cluster. The interval Arg466–Met492 is disordered. A compositionally biased stretch (basic and acidic residues) spans Ile480–Arg490.

It belongs to the eukaryotic-type primase large subunit family. In terms of assembly, heterodimer of a catalytic subunit Prim1 and a regulatory subunit Prim2, also known as the DNA primase complex. Component of the alpha DNA polymerase complex (also known as the alpha DNA polymerase-primase complex) consisting of four subunits: the catalytic subunit PolA1, the regulatory subunit PolA2, and the primase complex subunits Prim1 and Prim2 respectively. PolA1 associates with the DNA primase complex before association with PolA2. The cofactor is [4Fe-4S] cluster. In terms of tissue distribution, expressed in embryos (at protein level).

In terms of biological role, regulatory subunit of the DNA primase complex and component of the DNA polymerase alpha complex (also known as the alpha DNA polymerase-primase complex) which play an essential role in the initiation of DNA synthesis. During the S phase of the cell cycle, the DNA polymerase alpha complex (composed of a catalytic subunit PolA1, an accessory subunit PolA2 and two primase subunits, the catalytic subunit Prim1 and the regulatory subunit Prim2) is recruited to DNA at the replicative forks. The primase subunit of the polymerase alpha complex initiates DNA synthesis by oligomerising short RNA primers on both leading and lagging strands. These primers are initially extended by the polymerase alpha catalytic subunit and subsequently transferred to polymerase delta and polymerase epsilon for processive synthesis on the lagging and leading strand, respectively. In the primase complex, both subunits are necessary for the initial di-nucleotide formation, but the extension of the primer depends only on the catalytic subunit. Stabilizes and modulates the activity of the catalytic subunit. The chain is DNA primase large subunit from Drosophila melanogaster (Fruit fly).